The primary structure comprises 189 residues: MQKLIAIEGIDGSGKTTLANLLKEHLESKMKLNVIVTREPFSEDIIKLIEKIGWNDPILLVLLFAADREIHVNWLSKIKDADLIILDRYYFSSIAYQGALGVDEQWIKMVNSYFPKPDMVILLDLPIEVAISRIKNDKFNFEEKIKSLAKVREKYLKLAKEYNFYVVDASKDKNEVLEQAIKIIQKNLF.

9–16 (GIDGSGKT) contributes to the ATP binding site.

The protein belongs to the thymidylate kinase family.

The enzyme catalyses dTMP + ATP = dTDP + ADP. This is Probable thymidylate kinase 1 (tmk1) from Saccharolobus solfataricus (strain ATCC 35092 / DSM 1617 / JCM 11322 / P2) (Sulfolobus solfataricus).